A 447-amino-acid chain; its full sequence is UDP-glucosyl transferase 79T1 (447 aa).

Catalysis depends on H18, which acts as the Proton acceptor. D116 functions as the Charge relay in the catalytic mechanism. Positions 265, 323, 324, 341, 346, and 349 each coordinate UDP.

Belongs to the UDP-glycosyltransferase family. As to expression, mainly expressed in flowers, flower buds and young leaves, and, to a lesser extent, in old leaves, stems and roots.

Its pathway is secondary metabolite biosynthesis; terpenoid biosynthesis. Component of the oleanane-type triterpene saponins (e.g. saponarioside A and saponarioside B) biosynthetic pathway, leading to the production of natural products with detergent properties used as traditional sources of soap. A glycosyltransferase that mediates the conversion of QA-triF to QA-triFR via the elongation of the C-28 sugar chain with a deoxyhexose on the D-fucose moiety. This chain is UDP-glucosyl transferase 79T1, found in Saponaria officinalis (Common soapwort).